A 439-amino-acid polypeptide reads, in one-letter code: Mitochondrial distribution and morphology protein 12 (439 aa).

Residues 1–439 (MSIDINWEAA…VYPSFWTFLV (439 aa)) enclose the SMP-LTD domain. Over residues 71–84 (EEDEGDEDFSDDQD) the composition is skewed to acidic residues. Disordered regions lie at residues 71-104 (EEDE…GTWQ), 182-278 (TPLA…HEKK), and 362-385 (YIPG…RRDD). The segment covering 212–229 (DYPRPVHRQTDTDIDSGH) has biased composition (basic and acidic residues). Residues 230 to 255 (SRPSTADTLNSINSQRISNPALSHPH) show a composition bias toward polar residues. Over residues 256 to 269 (SSNESHPDTRDHSP) the composition is skewed to basic and acidic residues.

This sequence belongs to the MDM12 family. As to quaternary structure, component of the ER-mitochondria encounter structure (ERMES) or MDM complex, composed of MMM1, MDM10, MDM12 and MDM34. An MMM1 homodimer associates with one molecule of MDM12 on each side in a pairwise head-to-tail manner, and the SMP-LTD domains of MMM1 and MDM12 generate a continuous hydrophobic tunnel for phospholipid trafficking.

It localises to the mitochondrion outer membrane. The protein localises to the endoplasmic reticulum membrane. In terms of biological role, component of the ERMES/MDM complex, which serves as a molecular tether to connect the endoplasmic reticulum (ER) and mitochondria. Components of this complex are involved in the control of mitochondrial shape and protein biogenesis, and function in nonvesicular lipid trafficking between the ER and mitochondria. MDM12 is required for the interaction of the ER-resident membrane protein MMM1 and the outer mitochondrial membrane-resident beta-barrel protein MDM10. The MDM12-MMM1 subcomplex functions in the major beta-barrel assembly pathway that is responsible for biogenesis of all mitochondrial outer membrane beta-barrel proteins, and acts in a late step after the SAM complex. The MDM10-MDM12-MMM1 subcomplex further acts in the TOM40-specific pathway after the action of the MDM12-MMM1 complex. Essential for establishing and maintaining the structure of mitochondria and maintenance of mtDNA nucleoids. The sequence is that of Mitochondrial distribution and morphology protein 12 from Uncinocarpus reesii (strain UAMH 1704).